Consider the following 654-residue polypeptide: Arrestin domain-containing protein C (654 aa).

Residues 1–105 (MTQRSLKINI…AKRNLMDQWL (105 aa)) enclose the C2 domain. A coiled-coil region spans residues 616–647 (AKRIFLKIQQIQSERQKQQEQQEQQVVSNLEA).

Belongs to the arrestin family.

The chain is Arrestin domain-containing protein C (adcC) from Dictyostelium discoideum (Social amoeba).